Here is a 348-residue protein sequence, read N- to C-terminus: Carbamoyl phosphate synthase small chain (348 aa).

The CPSase stretch occupies residues 1–167 (MKRYLITSDG…VKNIRGKGER (167 aa)). L-glutamine-binding residues include serine 45, glycine 213, and glycine 215. The region spanning 168 to 348 (RILFIDLGSK…RRRTEDAAKG (181 aa)) is the Glutamine amidotransferase type-1 domain. Cysteine 242 (nucleophile) is an active-site residue. 5 residues coordinate L-glutamine: phenylalanine 243, glutamine 246, asparagine 282, glycine 284, and tyrosine 285. Residues histidine 321 and glutamate 323 contribute to the active site.

The protein belongs to the CarA family. Composed of two chains; the small (or glutamine) chain promotes the hydrolysis of glutamine to ammonia, which is used by the large (or ammonia) chain to synthesize carbamoyl phosphate. Tetramer of heterodimers (alpha,beta)4.

It catalyses the reaction hydrogencarbonate + L-glutamine + 2 ATP + H2O = carbamoyl phosphate + L-glutamate + 2 ADP + phosphate + 2 H(+). The catalysed reaction is L-glutamine + H2O = L-glutamate + NH4(+). It participates in amino-acid biosynthesis; L-arginine biosynthesis; carbamoyl phosphate from bicarbonate: step 1/1. Its pathway is pyrimidine metabolism; UMP biosynthesis via de novo pathway; (S)-dihydroorotate from bicarbonate: step 1/3. Functionally, small subunit of the glutamine-dependent carbamoyl phosphate synthetase (CPSase). CPSase catalyzes the formation of carbamoyl phosphate from the ammonia moiety of glutamine, carbonate, and phosphate donated by ATP, constituting the first step of 2 biosynthetic pathways, one leading to arginine and/or urea and the other to pyrimidine nucleotides. The small subunit (glutamine amidotransferase) binds and cleaves glutamine to supply the large subunit with the substrate ammonia. The sequence is that of Carbamoyl phosphate synthase small chain from Thermoplasma acidophilum (strain ATCC 25905 / DSM 1728 / JCM 9062 / NBRC 15155 / AMRC-C165).